The chain runs to 737 residues: Prospero homeobox protein 1 (737 aa).

The tract at residues 1–28 is interaction with RORG; that stretch reads MPDHDSTALLSRQTKRRRVDIGVKRTVG. Polar residues predominate over residues 103 to 135; sequence KNGGTEPSFQASGLSSTGSEVHQEDICSNSSRD. Residues 103–147 are disordered; the sequence is KNGGTEPSFQASGLSSTGSEVHQEDICSNSSRDSPPECLSPFGRP. Phosphoserine occurs at positions 177, 179, 199, 291, and 295. The tract at residues 178 to 221 is disordered; the sequence is HSPSVALRGNENEREMAPQSVSPRESYRENKRKQKLPQQQQQSF. The span at 320 to 337 shows a compositional bias: basic and acidic residues; that stretch reads MAENKPKREGSNKERDHG. Disordered stretches follow at residues 320 to 344 and 444 to 476; these read MAEN…LQPE and RKNS…AGFT. A Glycyl lysine isopeptide (Lys-Gly) (interchain with G-Cter in SUMO2) cross-link involves residue K324. Over residues 464 to 476 the composition is skewed to polar residues; the sequence is LHQSPLSATAGFT. Phosphoserine is present on residues S511 and S514. Residues 525–547 are disordered; that stretch reads RTKMSSHHLSHHPCSPAHPPSTA. S557 carries the post-translational modification Phosphoserine. Residues 577 to 635 enclose the Prospero-type homeo domain; sequence QEGLSPNHLKKAKLMFFYTRYPSSNMLKTYFSDVKFNRCITSQLIKWFSNFREFYYIQM. Positions 577-735 are homeo-Prospero; it reads QEGLSPNHLK…KSPNCLQELL (159 aa). In terms of domain architecture, Prospero spans 636 to 735; it reads EKYARQAIND…KSPNCLQELL (100 aa). An essential for nuclear localization, interaction with RORG, repression of RORG transcriptional activator activity region spans residues 723–729; sequence EIFKSPN.

The protein belongs to the Prospero homeodomain family. As to quaternary structure, interacts with RORA and RORG (via AF-2 motif). As to expression, expressed in the young neurons of the subventricular region of the CNS, developing eye lens and pancreas. It is also found in the developing liver, heart and skeletal muscle. In the eye, expressed in the lens and retina at postnatal day 10. In the retina, localized to the inner nuclear layer. In the lens, localized to epithelial and fiber cells.

The protein resides in the nucleus. Transcription factor involved in developmental processes such as cell fate determination, gene transcriptional regulation and progenitor cell regulation in a number of organs. Plays a critical role in embryonic development and functions as a key regulatory protein in neurogenesis and the development of the heart, eye lens, liver, pancreas and the lymphatic system. Involved in the regulation of the circadian rhythm. Represses: transcription of the retinoid-related orphan receptor RORG, transcriptional activator activity of RORA and RORG and the expression of RORA/G-target genes including core clock components: BMAL1, NPAS2 and CRY1 and metabolic genes: AVPR1A and ELOVL3. This is Prospero homeobox protein 1 (Prox1) from Mus musculus (Mouse).